A 267-amino-acid polypeptide reads, in one-letter code: Tryptophan synthase alpha chain (267 aa).

Catalysis depends on proton acceptor residues Glu49 and Asp60.

The protein belongs to the TrpA family. In terms of assembly, tetramer of two alpha and two beta chains.

The catalysed reaction is (1S,2R)-1-C-(indol-3-yl)glycerol 3-phosphate + L-serine = D-glyceraldehyde 3-phosphate + L-tryptophan + H2O. Its pathway is amino-acid biosynthesis; L-tryptophan biosynthesis; L-tryptophan from chorismate: step 5/5. The alpha subunit is responsible for the aldol cleavage of indoleglycerol phosphate to indole and glyceraldehyde 3-phosphate. This Carboxydothermus hydrogenoformans (strain ATCC BAA-161 / DSM 6008 / Z-2901) protein is Tryptophan synthase alpha chain.